Consider the following 698-residue polypeptide: Potassium-transporting ATPase ATP-binding subunit (698 aa).

Helical transmembrane passes span 56 to 76 (IMFV…VPSL), 82 to 102 (LWFN…ANFA), 240 to 260 (TVLI…PLFT), and 271 to 291 (ILVA…LSAI). The 4-aspartylphosphate intermediate role is filled by aspartate 324. ATP is bound by residues aspartate 361, glutamate 365, 393-400 (FKAETRMS), and lysine 412. Aspartate 535 and aspartate 539 together coordinate Mg(2+). The next 3 helical transmembrane spans lie at 605–625 (FAII…LNIM), 633–653 (AILS…PLAM), and 677–697 (GGVL…GLFI).

This sequence belongs to the cation transport ATPase (P-type) (TC 3.A.3) family. Type IA subfamily. In terms of assembly, the system is composed of three essential subunits: KdpA, KdpB and KdpC.

Its subcellular location is the cell membrane. It carries out the reaction K(+)(out) + ATP + H2O = K(+)(in) + ADP + phosphate + H(+). Part of the high-affinity ATP-driven potassium transport (or Kdp) system, which catalyzes the hydrolysis of ATP coupled with the electrogenic transport of potassium into the cytoplasm. This subunit is responsible for energy coupling to the transport system and for the release of the potassium ions to the cytoplasm. The sequence is that of Potassium-transporting ATPase ATP-binding subunit from Bacillus cytotoxicus (strain DSM 22905 / CIP 110041 / 391-98 / NVH 391-98).